Here is a 109-residue protein sequence, read N- to C-terminus: Ig kappa chain V region S211 (109 aa).

The framework-1 stretch occupies residues Asp-1–Cys-23. The interval Lys-24–Ala-35 is complementarity-determining-1. Positions Trp-36–Ser-50 are framework-2. Residues Ser-51 to Ser-57 form a complementarity-determining-2 region. The interval Gly-58 to Cys-89 is framework-3. Residues Glx-90–Thr-98 form a complementarity-determining-3 region. The segment at Phe-99–Lys-108 is framework-4.

In Rattus norvegicus (Rat), this protein is Ig kappa chain V region S211.